The sequence spans 207 residues: NADH-ubiquinone oxidoreductase chain 6 (207 aa).

5 helical membrane passes run methionine 1–glutamine 21, serine 28–leucine 48, phenylalanine 50–valine 70, tyrosine 88–aspartate 108, and phenylalanine 158–leucine 178.

The protein belongs to the complex I subunit 6 family.

It localises to the mitochondrion membrane. It carries out the reaction a ubiquinone + NADH + 5 H(+)(in) = a ubiquinol + NAD(+) + 4 H(+)(out). Functionally, core subunit of the mitochondrial membrane respiratory chain NADH dehydrogenase (Complex I) that is believed to belong to the minimal assembly required for catalysis. Complex I functions in the transfer of electrons from NADH to the respiratory chain. The immediate electron acceptor for the enzyme is believed to be ubiquinone. This chain is NADH-ubiquinone oxidoreductase chain 6 (ND6), found in Prototheca wickerhamii.